We begin with the raw amino-acid sequence, 440 residues long: Actin-like protein 7A (440 aa).

The segment at 1–27 (MSLDAVWAPQTANIGDGPAKKASDQTS) is disordered. Positions 36–56 (ASLRDGPAKRAVWVRRDNAEK) are required for interaction with TES.

Belongs to the actin family. Interacts (via N-terminus) with TES (via LIM domain 2). Heterodimer with TES; the heterodimer interacts with ENAH to form a heterotrimer. Interacts with ACTL9. Interacts with CYLC1; the interaction may be relevant for proper acrosome attachment to the nuclear envelope. Detected in testis. Detected at the acrosome of round spermatids (at protein level).

The protein resides in the cytoplasm. It localises to the cytoskeleton. Its subcellular location is the golgi apparatus. The protein localises to the nucleus. Functionally, essential for normal spermatogenesis and male fertility. Required for normal sperm head morphology, acroplaxome formation, acrosome attachment, and acrosome granule stability. May anchor and stabilize acrosomal adherence to the acroplaxome at least in part by facilitating the presence of F-actin in the subacrosomal space. May play an important role in formation and fusion of Golgi-derived vesicles during acrosome biogenesis. The sequence is that of Actin-like protein 7A (Actl7a) from Rattus norvegicus (Rat).